Consider the following 287-residue polypeptide: Flagellin (287 aa).

It belongs to the bacterial flagellin family.

It is found in the secreted. The protein localises to the bacterial flagellum. Functionally, flagellin is the subunit protein which polymerizes to form the filaments of bacterial flagella. In Listeria monocytogenes serovar 1/2a (strain ATCC BAA-679 / EGD-e), this protein is Flagellin (flaA).